The following is a 131-amino-acid chain: Large ribosomal subunit protein bL21 (131 aa).

Belongs to the bacterial ribosomal protein bL21 family. Part of the 50S ribosomal subunit. Contacts protein L20.

Its function is as follows. This protein binds to 23S rRNA in the presence of protein L20. The chain is Large ribosomal subunit protein bL21 from Cereibacter sphaeroides (strain ATCC 17023 / DSM 158 / JCM 6121 / CCUG 31486 / LMG 2827 / NBRC 12203 / NCIMB 8253 / ATH 2.4.1.) (Rhodobacter sphaeroides).